A 97-amino-acid chain; its full sequence is Integration host factor subunit alpha (97 aa).

The tract at residues Phe-50–Glu-71 is disordered.

Belongs to the bacterial histone-like protein family. As to quaternary structure, heterodimer of an alpha and a beta chain.

Its function is as follows. This protein is one of the two subunits of integration host factor, a specific DNA-binding protein that functions in genetic recombination as well as in transcriptional and translational control. The sequence is that of Integration host factor subunit alpha from Legionella pneumophila (strain Paris).